The sequence spans 1909 residues: DENN domain-containing protein 4C (1909 aa).

Residues 40-199 enclose the MABP domain; that stretch reads KAPITDIAII…SVFLCYKKSV (160 aa). Residues 191–364 enclose the uDENN domain; sequence VFLCYKKSVP…NIPFPSPQRP (174 aa). Residues 385 to 521 form the cDENN domain; that stretch reads PLPLSGANFS…PCKNLLSTLK (137 aa). Positions 523-641 constitute a dDENN domain; the sequence is LYPQLSSVHQ…CSFVSDKDTG (119 aa). S703, S737, and S741 each carry phosphoserine. The stretch at 821-855 is one PPR repeat; it reads VCYRVVMQLCGLWGHPVLAVRVLFEMKTARIKPNA. Residues E953, S965, S968, and S973 each carry the phosphoserine modification. Position 975 is a phosphothreonine (T975). A phosphoserine mark is found at S989, S996, S1003, S1046, S1061, S1099, S1126, S1184, S1225, S1244, S1252, and S1278. Disordered regions lie at residues 1243 to 1263 and 1277 to 1338; these read KSPL…NRES and SSLP…HGSL. A compositionally biased stretch (polar residues) spans 1296 to 1316; it reads SSPAVSRSKTFTGRFKQQTPS. A phosphoserine mark is found at S1325, S1337, and S1346. Residues 1419–1474 form a disordered region; it reads SGLVPSELTQSNTSLGSSSSSGDVGKLHYPTGEVPFPRGMKGQDFEKSDHGSSQNT. Low complexity predominate over residues 1426–1440; the sequence is LTQSNTSLGSSSSSG. The segment covering 1459–1468 has biased composition (basic and acidic residues); the sequence is KGQDFEKSDH. A phosphoserine mark is found at S1623, S1627, S1629, S1640, and S1799.

Phosphorylated in response to insulin.

It localises to the cytoplasmic vesicle membrane. The protein localises to the cell membrane. It is found in the cytoplasm. The protein resides in the cytosol. Guanine nucleotide exchange factor (GEF) activating RAB10. Promotes the exchange of GDP to GTP, converting inactive GDP-bound RAB10 into its active GTP-bound form. Thereby, stimulates SLC2A4/GLUT4 glucose transporter-enriched vesicles delivery to the plasma membrane in response to insulin. This Homo sapiens (Human) protein is DENN domain-containing protein 4C (DENND4C).